We begin with the raw amino-acid sequence, 341 residues long: Anthranilate phosphoribosyltransferase (341 aa).

5-phospho-alpha-D-ribose 1-diphosphate-binding positions include Gly85, 88 to 89, Thr93, 95 to 98, 113 to 121, and Ser125; these read GD, NIST, and KHGNRSASG. Gly85 is an anthranilate binding site. Ser97 serves as a coordination point for Mg(2+). Asn116 lines the anthranilate pocket. Arg171 provides a ligand contact to anthranilate. Mg(2+) contacts are provided by Asp230 and Glu231.

The protein belongs to the anthranilate phosphoribosyltransferase family. Homodimer. The cofactor is Mg(2+).

It catalyses the reaction N-(5-phospho-beta-D-ribosyl)anthranilate + diphosphate = 5-phospho-alpha-D-ribose 1-diphosphate + anthranilate. The protein operates within amino-acid biosynthesis; L-tryptophan biosynthesis; L-tryptophan from chorismate: step 2/5. Functionally, catalyzes the transfer of the phosphoribosyl group of 5-phosphorylribose-1-pyrophosphate (PRPP) to anthranilate to yield N-(5'-phosphoribosyl)-anthranilate (PRA). In Prochlorococcus marinus (strain SARG / CCMP1375 / SS120), this protein is Anthranilate phosphoribosyltransferase.